A 184-amino-acid polypeptide reads, in one-letter code: Probable RNA 2'-phosphotransferase (184 aa).

Belongs to the KptA/TPT1 family.

Functionally, removes the 2'-phosphate from RNA via an intermediate in which the phosphate is ADP-ribosylated by NAD followed by a presumed transesterification to release the RNA and generate ADP-ribose 1''-2''-cyclic phosphate (APPR&gt;P). May function as an ADP-ribosylase. This Rhizobium johnstonii (strain DSM 114642 / LMG 32736 / 3841) (Rhizobium leguminosarum bv. viciae) protein is Probable RNA 2'-phosphotransferase.